A 162-amino-acid chain; its full sequence is Urease accessory protein UreE 1 (162 aa).

Residues 143 to 162 form a disordered region; the sequence is SGGHQHHHGHDHDHHHPDHE. The span at 152–162 shows a compositional bias: basic and acidic residues; sequence HDHDHHHPDHE.

The protein belongs to the UreE family.

The protein resides in the cytoplasm. Functionally, involved in urease metallocenter assembly. Binds nickel. Probably functions as a nickel donor during metallocenter assembly. The chain is Urease accessory protein UreE 1 from Brucella suis biovar 1 (strain 1330).